The primary structure comprises 161 residues: Assembly protein P7 (161 aa).

Homodimer. Part of the packaging complex composed of RDRP, P4 and P7. Interacts with RDRP.

Its subcellular location is the virion. In terms of biological role, assembly protein part of the packaging complex that packages the viral RNA segments, replicate them into a double-stranded form and transcribe them. Required for efficient procapsid assembly. Necessary for stable packaging. May stabilize the RNA-dependent RNA polymerase (RdRP) in its position at the three-fold axis on the inner side of empty-unexpanded procapsids. Could play a role in viral RNA recognition. Seems to be involved in the regulation of plus strand synthesis (transcription) as a fidelity factor. In Pseudomonas phage phi6 (Bacteriophage phi-6), this protein is Assembly protein P7 (P7).